The chain runs to 118 residues: UPF0102 protein PC1_0307 (118 aa).

Belongs to the UPF0102 family.

The sequence is that of UPF0102 protein PC1_0307 from Pectobacterium carotovorum subsp. carotovorum (strain PC1).